Consider the following 1897-residue polypeptide: Spectinabilin polyketide synthase system protein NorA (1897 aa).

One can recognise a Ketosynthase family 3 (KS3) domain in the interval 112-536 (EEPIAIVGMG…GTNAHIILEQ (425 aa)). Residues Cys-283, His-418, and His-458 each act as for beta-ketoacyl synthase activity in the active site. Residues 538-563 (APEPERPHAPEADGEPRPLPWPVSGH) form a disordered region. The span at 540–553 (EPERPHAPEADGEP) shows a compositional bias: basic and acidic residues. A Malonyl-CoA:ACP transacylase (MAT) domain is found at 644 to 962 (FVFPGQGSQW…VAEAHVHGVA (319 aa)). Positions 1012-1139 (HPLLGAAIPL…GTLAPGGGHP (128 aa)) are N-terminal hotdog fold. In terms of domain architecture, PKS/mFAS DH spans 1012-1289 (HPLLGAAIPL…MRPVTAEALH (278 aa)). The active-site Proton acceptor; for dehydratase activity is His-1045. Residues 1113–1152 (SRPEDAGADEPWTRHAEGTLAPGGGHPRQDPGPWPPTGAR) are disordered. The interval 1151–1289 (AREIDLDDCY…MRPVTAEALH (139 aa)) is C-terminal hotdog fold. Asp-1211 acts as the Proton donor; for dehydratase activity in catalysis. In terms of domain architecture, Ketoreductase (KR) spans 1494–1671 (GTVLVTGGLG…GVSMGWGMWA (178 aa)). Residues 1777 to 1852 (ALLLGVVRGH…ALSRYLRTLL (76 aa)) enclose the Carrier domain. At Ser-1812 the chain carries O-(pantetheine 4'-phosphoryl)serine. The interval 1854-1873 (PDPAPAPTAPDGQPGPDQAD) is disordered. Positions 1862 to 1871 (APDGQPGPDQ) are enriched in low complexity.

In terms of assembly, the spectinabilin polyketide synthase complex is composed of 4 proteins, NorA, NorA', NorB and NorC. The complex comprises 6 modules with a total of 28 catalytic domains catalyzing 7 chain elongations. NorA comprises one module, NorA' two modules, NorB one module and NorC two modules. The cofactor is pantetheine 4'-phosphate.

It catalyses the reaction 4-nitrobenzoyl-CoA + 6 (S)-methylmalonyl-CoA + malonyl-CoA + 6 NADPH + 12 H(+) = demethyldeoxyspectinabilin + 7 CO2 + 6 NADP(+) + 8 CoA + 5 H2O. It functions in the pathway antibiotic biosynthesis. It participates in polyketide biosynthesis. In terms of biological role, component of a type I modular polyketide synthase (PKS) that generates the backbone of the antibiotic spectinabilin (also known as neoaureothin), a nitroaryl-substituted polyketide metabolite. This PKS system accepts the unusual starter unit 4-nitrobenzoyl-CoA and extends it by 6 molecules of (S)-methylmalonyl-CoA and a single molecule of malonyl-CoA. The first module, NorA, is used twice in an iterative fashion. The sequence is that of Spectinabilin polyketide synthase system protein NorA from Streptomyces orinoci (Streptoverticillium orinoci).